A 716-amino-acid chain; its full sequence is Forkhead box protein P2 (716 aa).

Residues 1–28 (MMQESATETISNSSMNQNGMSTLSSQLD) show a composition bias toward polar residues. Disordered stretches follow at residues 1–45 (MMQE…SEVS) and 286–340 (KHGG…TGAS). Positions 293–306 (TTNNSSSTTSSTTS) are enriched in low complexity. Polar residues predominate over residues 316 to 325 (SIVNGQSSVL). Over residues 327 to 338 (ARRDSSSHEETG) the composition is skewed to basic and acidic residues. Residues 347 to 372 (GVCKWPGCESICEDFGQFLKHLNNEH) form a C2H2-type zinc finger. A leucine-zipper region spans residues 389–410 (VQQLEIQLSKERERLQAMMTHL). The interval 423 to 427 (PLNLV) is CTBP1-binding. Residues 439–460 (TSPQSLPQTPTTPTAPVTPITQ) are compositionally biased toward low complexity. The segment at 439–466 (TSPQSLPQTPTTPTAPVTPITQGPSVIT) is disordered. Residues 505–595 (RPPFTYATLI…SQKITGSPTL (91 aa)) constitute a DNA-binding region (fork-head). Disordered regions lie at residues 650 to 669 (LDHI…QPHI) and 679 to 716 (VIAE…EDLE). Acidic residues predominate over residues 700-716 (LEDDREIEEEPLSEDLE).

As to quaternary structure, forms homodimers and heterodimers with FOXP1 and FOXP4. Dimerization is required for DNA-binding. Interacts with CTBP1. Interacts with FOXP1. Interacts with TBR1. Interacts with ZMYM2.

It localises to the nucleus. Its function is as follows. Transcriptional repressor that may play a role in the specification and differentiation of lung epithelium. May also play a role in developing neural, gastrointestinal and cardiovascular tissues. Can act with CTBP1 to synergistically repress transcription but CTPBP1 is not essential. Plays a role in synapse formation by regulating SRPX2 levels. This is Forkhead box protein P2 (FOXP2) from Pan paniscus (Pygmy chimpanzee).